Reading from the N-terminus, the 459-residue chain is MLKEYRTVTEVVGPLMVVEGVEGVKYDELVEIELHTGEKRRGKVLEVNGSKAMVQIFEGSSGINLKGTKAKFLGRPLELGVSEDMLGRVFDGMGRPNDNGPDIIPEKRVDINGEAINPMARDFPSEFIQTGVSAIDGLNTLVRGQKLPVFSAAGLPHAELAAQIARQAKVLNSDSKFAIVFAAIGITFEEAQFFQDEFKRTGAIDRSVLFMNLASDPAIERIATPRMALTCAEYLAYEKGMQVLVIMTDITNYAEALREISAARKEVPGRRGYPGYLYTDLSTLYERAGRLRGKEGSITQIPILTMPEDDKTHPIPDLTGYITEGQIILSRELYKKGIMPPIDVLPSLSRLKDKGIGKGKTREDHADTMNQLFAAYSQGKQAKELSAILGESALSDTDKKLAKFAEAFEDEYVSQGFNTNRTIEETLNLGWKLLKMLPRTELKRIRDEYLEKYMPREEE.

The protein belongs to the ATPase alpha/beta chains family.

Its function is as follows. Produces ATP from ADP in the presence of a proton gradient across the membrane. The V-type beta chain is a regulatory subunit. This is V-type ATP synthase beta chain from Clostridium botulinum (strain Alaska E43 / Type E3).